The following is a 401-amino-acid chain: Probable tRNA sulfurtransferase (401 aa).

Residues T63–R168 enclose the THUMP domain. ATP is bound by residues L186–L187, Y211–F212, R268, G290, and Q299.

Belongs to the ThiI family.

The protein resides in the cytoplasm. The catalysed reaction is [ThiI sulfur-carrier protein]-S-sulfanyl-L-cysteine + a uridine in tRNA + 2 reduced [2Fe-2S]-[ferredoxin] + ATP + H(+) = [ThiI sulfur-carrier protein]-L-cysteine + a 4-thiouridine in tRNA + 2 oxidized [2Fe-2S]-[ferredoxin] + AMP + diphosphate. The enzyme catalyses [ThiS sulfur-carrier protein]-C-terminal Gly-Gly-AMP + S-sulfanyl-L-cysteinyl-[cysteine desulfurase] + AH2 = [ThiS sulfur-carrier protein]-C-terminal-Gly-aminoethanethioate + L-cysteinyl-[cysteine desulfurase] + A + AMP + 2 H(+). It participates in cofactor biosynthesis; thiamine diphosphate biosynthesis. Catalyzes the ATP-dependent transfer of a sulfur to tRNA to produce 4-thiouridine in position 8 of tRNAs, which functions as a near-UV photosensor. Also catalyzes the transfer of sulfur to the sulfur carrier protein ThiS, forming ThiS-thiocarboxylate. This is a step in the synthesis of thiazole, in the thiamine biosynthesis pathway. The sulfur is donated as persulfide by IscS. In Treponema pallidum subsp. pallidum (strain SS14), this protein is Probable tRNA sulfurtransferase.